The primary structure comprises 320 residues: tRNA U34 carboxymethyltransferase (320 aa).

Residues Lys-89, Trp-103, Lys-108, Gly-128, 150-152 (DPT), 179-180 (IE), Met-194, Tyr-198, and Arg-313 contribute to the carboxy-S-adenosyl-L-methionine site.

This sequence belongs to the class I-like SAM-binding methyltransferase superfamily. CmoB family. Homotetramer.

It catalyses the reaction carboxy-S-adenosyl-L-methionine + 5-hydroxyuridine(34) in tRNA = 5-carboxymethoxyuridine(34) in tRNA + S-adenosyl-L-homocysteine + H(+). Catalyzes carboxymethyl transfer from carboxy-S-adenosyl-L-methionine (Cx-SAM) to 5-hydroxyuridine (ho5U) to form 5-carboxymethoxyuridine (cmo5U) at position 34 in tRNAs. The sequence is that of tRNA U34 carboxymethyltransferase from Actinobacillus pleuropneumoniae serotype 3 (strain JL03).